Here is a 159-residue protein sequence, read N- to C-terminus: 3-hydroxyacyl-[acyl-carrier-protein] dehydratase FabZ (159 aa).

H62 is a catalytic residue.

It belongs to the thioester dehydratase family. FabZ subfamily.

It localises to the cytoplasm. It catalyses the reaction a (3R)-hydroxyacyl-[ACP] = a (2E)-enoyl-[ACP] + H2O. In terms of biological role, involved in unsaturated fatty acids biosynthesis. Catalyzes the dehydration of short chain beta-hydroxyacyl-ACPs and long chain saturated and unsaturated beta-hydroxyacyl-ACPs. In Methylobacterium nodulans (strain LMG 21967 / CNCM I-2342 / ORS 2060), this protein is 3-hydroxyacyl-[acyl-carrier-protein] dehydratase FabZ.